Here is a 199-residue protein sequence, read N- to C-terminus: Hematopoietic prostaglandin D synthase (199 aa).

Positions 2–79 constitute a GST N-terminal domain; sequence PNYKLTYFNL…YLARESGLAG (78 aa). Glutathione-binding positions include Tyr-8, Arg-14, Trp-39, 49 to 51, and 63 to 64; these read GKV and QS. The GST C-terminal domain occupies 81-199; sequence TPVEQALADA…WIQKRPKTAI (119 aa).

Belongs to the GST superfamily. Sigma family. Glutathione is required as a cofactor. As to expression, highly expressed in liver, kidney, small intestine and colon, moderately in pancreas, bone marrow, lung and ovary, and expressed at low levels in spleen, thymus, heart and brain. Not detected in oviduct or skin (at protein level). Expressed in liver.

The protein localises to the cytoplasm. It carries out the reaction prostaglandin H2 = prostaglandin D2. The catalysed reaction is RX + glutathione = an S-substituted glutathione + a halide anion + H(+). The enzyme catalyses 2-glyceryl-prostaglandin H2 = 2-glyceryl-prostaglandin D2. Its function is as follows. Bifunctional enzyme which catalyzes both the conversion of PGH2 to PGD2, a prostaglandin involved in smooth muscle contraction/relaxation and a potent inhibitor of platelet aggregation, and the conjugation of glutathione with a wide range of aryl halides, organic isothiocyanates and alpha,beta-unsaturated carbonyls. Also exhibits low glutathione-peroxidase activity towards cumene hydroperoxide and t-butyl hydroperoxide. The chain is Hematopoietic prostaglandin D synthase (HPGDS) from Gallus gallus (Chicken).